Here is a 1254-residue protein sequence, read N- to C-terminus: MENKNNKVIKIELASADTIRSWSHGEVTKPETINYKTLKAEKDGLFDEKIFGPTKNYECFCGKFKKANPMNKGKKCEKCGVELTESIVRRERMGHIELAEPVTHIWMVKVSPSRIASLLDLKSKELEEVVYFVSHIVLDPGTSKHFAAKEVLDLGVSKSQKTRSKLRPAIEEIVTLINDPAHRDTLKAERLLEELNNPTIPFSIDEATALISKYTDAKFGIGASAIEELLKQIDLDKEIEITKNTLDAIGPNADNSKLLKRLDILESLKRSNQKPEWMVLRVLPVIPPDIRPIIQLDGGRFTTSEINDLYRRIIIRNERLLKVKEMGAPSIIINNEKRMLQEAVDALLDNERKPRPIQGKDKRPLKSLTSVLKGKQGRFRQNLLGKRVDYSGRSVIAIGPDLKMYQAGIPREMALTLFKPFVIQWLQEHEYAENVKVAEKMILQNDPKIWEALEHVIKDRPVLLNRAPTLHRLGIQAFEPKLVKGKAIRLHPLVTTAFNADFDGDQMAVHVPITKEAVAEARALMLGSNAILGPKDGKAIVTPGQDIILGNYYATFEEKGQLGEGTMFAEITEAINAFDTGIVSLNAVIGIAVDALPAEKFTEEQRKGYLLTTVGKILFNQIFDASFPWINSSSIYDAKEAVNSFIFDFSKDINEAIAEYTIVTPIKKKELSIIIEIYFNKFGARKTAEMLDKMKDLGFKYSTKSGTTISAGDVVAFKHKYEEFAEADQKVAEITSFYNEGMLTKEEKKHRVIEVWSDVKDDIQKRLELVLKQDTKNPVFVMADSGARGNVSNFTQLVGMRGLMNDTKGDIKEIPIKSSFREGLSVSEYFVSTHGARKGMADLALKTADSGYLTRRLVDVSQEIVVVNEDCKANKGFEIESVIDTKHNNVIVPLKDRIVGRYSFNDIKDIKGNVIVAKDTLIESKEADAIIAAGITKVTIRSVLTCDNQKGVCQRCYGRNLATASLVKIGEPVGVIAAQSIGEPGTQLTMRTFHTGGVAGDADITQGLPRIKELLDVTTQKGSVAIIAEKAGVVSDIINKNGINTIVVTEEVNGTQIEKQYKTMYNAVLRVNKGDQVKPGKKLTEGSINLHDLLEVAGTTAVQNYILKEVQKVYRLQGIEISDKYIEIIVKQMLNKVKVIQSGESHLLQGEIVTQQKFKEVVTQCIREGLVPPVAKNQILGIKKAPLKSESWLSSASFQDTARVLTDAIIKGREDKLEGLKENIMLGNLIPAGTGLTGIEEVMEIAEEYHKNEY.

Positions 59, 61, 76, and 79 each coordinate Zn(2+). Mg(2+) is bound by residues aspartate 501, aspartate 503, and aspartate 505. Residues cysteine 871, cysteine 946, cysteine 953, and cysteine 956 each contribute to the Zn(2+) site.

Belongs to the RNA polymerase beta' chain family. The RNAP catalytic core consists of 2 alpha, 1 beta, 1 beta' and 1 omega subunit. When a sigma factor is associated with the core the holoenzyme is formed, which can initiate transcription. The cofactor is Mg(2+). Zn(2+) serves as cofactor.

It carries out the reaction RNA(n) + a ribonucleoside 5'-triphosphate = RNA(n+1) + diphosphate. Its function is as follows. DNA-dependent RNA polymerase catalyzes the transcription of DNA into RNA using the four ribonucleoside triphosphates as substrates. This is DNA-directed RNA polymerase subunit beta' from Mesoplasma florum (strain ATCC 33453 / NBRC 100688 / NCTC 11704 / L1) (Acholeplasma florum).